Here is a 163-residue protein sequence, read N- to C-terminus: MMDPIKTYEIKEEELAKTAYATIKTNKGNIALELFYKDAPQAVSNFVTLAKEGFYNGLNFHRVIAGFVAQGGCPYGTGTGGPGHRIKCEVAHNPNKHKRGSISMAHAGRDTGGSQFFLCFVDLPHLDGEHTVFGKITSAEGLSVLDKIKQGDIIESVVFSSSL.

The 147-residue stretch at 17–163 (KTAYATIKTN…IESVVFSSSL (147 aa)) folds into the PPIase cyclophilin-type domain.

This sequence belongs to the cyclophilin-type PPIase family.

It carries out the reaction [protein]-peptidylproline (omega=180) = [protein]-peptidylproline (omega=0). PPIases accelerate the folding of proteins. It catalyzes the cis-trans isomerization of proline imidic peptide bonds in oligopeptides. The chain is Peptidyl-prolyl cis-trans isomerase (ppiA) from Helicobacter pylori (strain ATCC 700392 / 26695) (Campylobacter pylori).